Consider the following 219-residue polypeptide: N-(5'-phosphoribosyl)anthranilate isomerase (219 aa).

It belongs to the TrpF family.

It carries out the reaction N-(5-phospho-beta-D-ribosyl)anthranilate = 1-(2-carboxyphenylamino)-1-deoxy-D-ribulose 5-phosphate. Its pathway is amino-acid biosynthesis; L-tryptophan biosynthesis; L-tryptophan from chorismate: step 3/5. This chain is N-(5'-phosphoribosyl)anthranilate isomerase, found in Bradyrhizobium sp. (strain BTAi1 / ATCC BAA-1182).